A 197-amino-acid polypeptide reads, in one-letter code: Glycerol-3-phosphate acyltransferase (197 aa).

5 consecutive transmembrane segments (helical) span residues 6–26 (LFIV…AIIV), 58–78 (AITL…AHYL), 82–102 (MLNV…PIFF), 116–136 (ALLA…VFVA), and 157–177 (FYLI…CLWI).

The protein belongs to the PlsY family. As to quaternary structure, probably interacts with PlsX.

The protein localises to the cell inner membrane. It carries out the reaction an acyl phosphate + sn-glycerol 3-phosphate = a 1-acyl-sn-glycero-3-phosphate + phosphate. Its pathway is lipid metabolism; phospholipid metabolism. Catalyzes the transfer of an acyl group from acyl-phosphate (acyl-PO(4)) to glycerol-3-phosphate (G3P) to form lysophosphatidic acid (LPA). This enzyme utilizes acyl-phosphate as fatty acyl donor, but not acyl-CoA or acyl-ACP. This is Glycerol-3-phosphate acyltransferase from Ruthia magnifica subsp. Calyptogena magnifica.